We begin with the raw amino-acid sequence, 125 residues long: MIYGTGVDIVDISRFQRFVSENNTSLLQRVFTPRELEYCSGKKHSAQHFALRFAAKEAFLKALGTGLRGGVSWQHMEIVNDRLGKPEMLLTGKAGELFAEAGLQKIFLSLSHDGNMAVAMLVLEK.

Mg(2+) contacts are provided by D8 and E57.

The protein belongs to the P-Pant transferase superfamily. AcpS family. It depends on Mg(2+) as a cofactor.

The protein resides in the cytoplasm. It catalyses the reaction apo-[ACP] + CoA = holo-[ACP] + adenosine 3',5'-bisphosphate + H(+). In terms of biological role, transfers the 4'-phosphopantetheine moiety from coenzyme A to a Ser of acyl-carrier-protein. The sequence is that of Holo-[acyl-carrier-protein] synthase from Geotalea daltonii (strain DSM 22248 / JCM 15807 / FRC-32) (Geobacter daltonii).